A 598-amino-acid chain; its full sequence is UvrABC system protein C (598 aa).

A GIY-YIG domain is found at 14-91 (DSPGCYLHKD…IQKNMPKYNI (78 aa)). The region spanning 196–231 (DKIIEDLRSKMLAASEEMAFERAAEYRDLISGIATM) is the UVR domain.

This sequence belongs to the UvrC family. As to quaternary structure, interacts with UvrB in an incision complex.

It is found in the cytoplasm. In terms of biological role, the UvrABC repair system catalyzes the recognition and processing of DNA lesions. UvrC both incises the 5' and 3' sides of the lesion. The N-terminal half is responsible for the 3' incision and the C-terminal half is responsible for the 5' incision. This chain is UvrABC system protein C, found in Streptococcus pyogenes serotype M28 (strain MGAS6180).